The sequence spans 702 residues: Mesothelin-like protein (702 aa).

The signal sequence occupies residues 1 to 35 (MAAAVTIPGPRIGALQSSGLTLLLSLAAHCSGPQA). Topologically, residues 36–638 (KVLSPGGLDA…AQASTSGSLW (603 aa)) are extracellular. N-linked (GlcNAc...) asparagine glycosylation is found at Asn122, Asn307, and Asn424. A disordered region spans residues 588–611 (QLGLDASPTSPTGPAHGTRGPPST). Residues 639–668 (APLGYLPLAMALPCSLLCLLHWGTCILVSV) traverse the membrane as a helical segment. Residues 669-702 (DSVASGWLGSQGSGAGKTEVLDSAGRPLGLTGQL) lie on the Cytoplasmic side of the membrane.

Belongs to the mesothelin family.

It localises to the membrane. Functionally, may play a role in cellular adhesion. In Homo sapiens (Human), this protein is Mesothelin-like protein (MSLNL).